Consider the following 382-residue polypeptide: F-box/kelch-repeat protein At3g16580 (382 aa).

In terms of domain architecture, F-box spans 9–55 (WEFSLSLPWELIEEILSRVPPESLLRFKTVSKQWNALFRDKTFINNH). Kelch repeat units follow at residues 150–196 (KIFA…NIYT) and 334–381 (WIYV…AELQ).

The protein is F-box/kelch-repeat protein At3g16580 of Arabidopsis thaliana (Mouse-ear cress).